Here is a 75-residue protein sequence, read N- to C-terminus: Exodeoxyribonuclease 7 small subunit (75 aa).

This sequence belongs to the XseB family. As to quaternary structure, heterooligomer composed of large and small subunits.

It localises to the cytoplasm. The catalysed reaction is Exonucleolytic cleavage in either 5'- to 3'- or 3'- to 5'-direction to yield nucleoside 5'-phosphates.. Functionally, bidirectionally degrades single-stranded DNA into large acid-insoluble oligonucleotides, which are then degraded further into small acid-soluble oligonucleotides. The chain is Exodeoxyribonuclease 7 small subunit from Clostridium perfringens (strain ATCC 13124 / DSM 756 / JCM 1290 / NCIMB 6125 / NCTC 8237 / Type A).